We begin with the raw amino-acid sequence, 208 residues long: Small ribosomal subunit protein eS8 (208 aa).

Residues 1–40 (MGISRDNWHKRRKTGGKRKPVHKKRKYELGRPPSNTKLGP) are disordered. Over residues 8 to 26 (WHKRRKTGGKRKPVHKKRK) the composition is skewed to basic residues.

The protein belongs to the eukaryotic ribosomal protein eS8 family. As to quaternary structure, component of the small ribosomal subunit.

Its subcellular location is the cytoplasm. In terms of biological role, component of the small ribosomal subunit. The ribosome is a large ribonucleoprotein complex responsible for the synthesis of proteins in the cell. The chain is Small ribosomal subunit protein eS8 (rps8) from Ictalurus punctatus (Channel catfish).